We begin with the raw amino-acid sequence, 597 residues long: MPLFILTETSAGYGLFKAADKKLLSSDNLAERLNSVEKITKEIKYKEFAKFESAATALEEIAGVVEGKVTPKLNSLLAEIGNEKKVTLAVAESKLGAAINKIPNLDIQPIADSTTTDLFRAIRQYLPELIPGMLPENFKEMSLGLSHSLSRHKLKFSPEKVDVMIVHAVSLLDELDKELNTYAMRVKEWYGWHFPELAKILPDNLSYARIIVTMGMRSNATTADLSEILPHEIEAAVKAAADISMGTEVSEEDLQNIKYLAERVIDYSVYRKQLSDYLENRMRAIAPNMTELVGALVGARLIAHAGSVMNLAKNPGSTIQILGAEKALFRALKTKHATPKYGLIYHASLVGQASGANKGKMARQLASKVALGVRTDALAEFPEDADDETRASLGIRSRAKLENNLRQLEGKPIASKGVSVGPNGIPVASAPKWDIKEARKYNIDADGLAADAEAPKKPLIQEVEMQDAPADEDEEMKDVSKKSKKDKKEKKEKKDKKAKKELDDEDFERLAKAAGMSVDKFKRRFERGQISIKEDGTLEILSKKDFKGKDAEAEEEAEEEEKPAKKSKSSKRKAEAEEEETTKEEKPKKKKKKSSKE.

The Nop domain occupies 285–410; it reads IAPNMTELVG…LENNLRQLEG (126 aa). The tract at residues 452–597 is disordered; it reads AEAPKKPLIQ…KKKKKKSSKE (146 aa). The span at 482 to 499 shows a compositional bias: basic residues; the sequence is KSKKDKKEKKEKKDKKAK. The span at 532 to 551 shows a compositional bias: basic and acidic residues; it reads IKEDGTLEILSKKDFKGKDA. The segment covering 552–561 has biased composition (acidic residues); it reads EAEEEAEEEE. Over residues 588-597 the composition is skewed to basic residues; the sequence is KKKKKKSSKE.

It belongs to the NOP5/NOP56 family.

The protein localises to the nucleus. It is found in the nucleolus. Functionally, required for pre-18S rRNA processing. May bind microtubules. This is Nucleolar protein 58 (nop-58) from Neurospora crassa (strain ATCC 24698 / 74-OR23-1A / CBS 708.71 / DSM 1257 / FGSC 987).